The sequence spans 75 residues: Small ribosomal subunit protein bS18 (75 aa).

This sequence belongs to the bacterial ribosomal protein bS18 family. Part of the 30S ribosomal subunit. Forms a tight heterodimer with protein bS6.

Functionally, binds as a heterodimer with protein bS6 to the central domain of the 16S rRNA, where it helps stabilize the platform of the 30S subunit. In Cellvibrio japonicus (strain Ueda107) (Pseudomonas fluorescens subsp. cellulosa), this protein is Small ribosomal subunit protein bS18.